We begin with the raw amino-acid sequence, 381 residues long: DNA replication and repair protein RecF (381 aa).

Residue 30-37 (GENAQGKT) coordinates ATP.

It belongs to the RecF family.

The protein resides in the cytoplasm. In terms of biological role, the RecF protein is involved in DNA metabolism; it is required for DNA replication and normal SOS inducibility. RecF binds preferentially to single-stranded, linear DNA. It also seems to bind ATP. The polypeptide is DNA replication and repair protein RecF (Lactobacillus delbrueckii subsp. bulgaricus (strain ATCC BAA-365 / Lb-18)).